Reading from the N-terminus, the 64-residue chain is Transcription factor P13 (64 aa).

In terms of biological role, transcription factor that regulates expression of phage structural components with protein P14. The sequence is that of Transcription factor P13 from Pseudoalteromonas phage PM2 (Bacteriophage PM2).